Reading from the N-terminus, the 79-residue chain is Serine protease inhibitor Kazal-type 1-like (79 aa).

The first 23 residues, 1–23 (MKVAIIFLLSALALLNLAGNTTA), serve as a signal peptide directing secretion. Positions 26–79 (IGKKANCPNTLVGCPRDYDPVCGTDGKTYANECILCFENRKFGTSIRIQRRGLC) constitute a Kazal-like domain. 3 cysteine pairs are disulfide-bonded: Cys32/Cys61, Cys39/Cys58, and Cys47/Cys79.

In terms of tissue distribution, seminal vesicle.

The protein resides in the secreted. Its function is as follows. Serine protease inhibitor which exhibits anti-trypsin activity. In the pancreas, protects against trypsin-catalyzed premature activation of zymogens. Functionally, in the male reproductive tract, binds to sperm heads where it modulates sperm capacitance by inhibiting calcium uptake and nitrogen oxide (NO) production. The sequence is that of Serine protease inhibitor Kazal-type 1-like from Rattus norvegicus (Rat).